We begin with the raw amino-acid sequence, 415 residues long: Serine hydroxymethyltransferase 2 (415 aa).

(6S)-5,6,7,8-tetrahydrofolate contacts are provided by residues L121 and G125 to L127. Position 229 is an N6-(pyridoxal phosphate)lysine (K229).

Belongs to the SHMT family. As to quaternary structure, homodimer. Pyridoxal 5'-phosphate is required as a cofactor.

It is found in the cytoplasm. It catalyses the reaction (6R)-5,10-methylene-5,6,7,8-tetrahydrofolate + glycine + H2O = (6S)-5,6,7,8-tetrahydrofolate + L-serine. It participates in one-carbon metabolism; tetrahydrofolate interconversion. It functions in the pathway amino-acid biosynthesis; glycine biosynthesis; glycine from L-serine: step 1/1. In terms of biological role, catalyzes the reversible interconversion of serine and glycine with tetrahydrofolate (THF) serving as the one-carbon carrier. This reaction serves as the major source of one-carbon groups required for the biosynthesis of purines, thymidylate, methionine, and other important biomolecules. Also exhibits THF-independent aldolase activity toward beta-hydroxyamino acids, producing glycine and aldehydes, via a retro-aldol mechanism. The sequence is that of Serine hydroxymethyltransferase 2 from Bordetella parapertussis (strain 12822 / ATCC BAA-587 / NCTC 13253).